The following is a 279-amino-acid chain: Putative pyruvate, phosphate dikinase regulatory protein (279 aa).

Glycine 153–threonine 160 is an ADP binding site.

It belongs to the pyruvate, phosphate/water dikinase regulatory protein family. PDRP subfamily.

The catalysed reaction is N(tele)-phospho-L-histidyl/L-threonyl-[pyruvate, phosphate dikinase] + ADP = N(tele)-phospho-L-histidyl/O-phospho-L-threonyl-[pyruvate, phosphate dikinase] + AMP + H(+). It carries out the reaction N(tele)-phospho-L-histidyl/O-phospho-L-threonyl-[pyruvate, phosphate dikinase] + phosphate + H(+) = N(tele)-phospho-L-histidyl/L-threonyl-[pyruvate, phosphate dikinase] + diphosphate. In terms of biological role, bifunctional serine/threonine kinase and phosphorylase involved in the regulation of the pyruvate, phosphate dikinase (PPDK) by catalyzing its phosphorylation/dephosphorylation. The polypeptide is Putative pyruvate, phosphate dikinase regulatory protein (Bradyrhizobium diazoefficiens (strain JCM 10833 / BCRC 13528 / IAM 13628 / NBRC 14792 / USDA 110)).